The chain runs to 394 residues: Elongation factor Tu 1 (394 aa).

Residues 10 to 204 (KPHVNVGTIG…ALDSYIPQPE (195 aa)) enclose the tr-type G domain. A G1 region spans residues 19-26 (GHVDHGKT). 19–26 (GHVDHGKT) serves as a coordination point for GTP. Residue T26 coordinates Mg(2+). The interval 60–64 (GITIN) is G2. The tract at residues 81–84 (DCPG) is G3. GTP-binding positions include 81–85 (DCPGH) and 136–139 (NKCD). Positions 136 to 139 (NKCD) are G4. The segment at 174-176 (SAL) is G5.

This sequence belongs to the TRAFAC class translation factor GTPase superfamily. Classic translation factor GTPase family. EF-Tu/EF-1A subfamily. As to quaternary structure, monomer.

It localises to the cytoplasm. The enzyme catalyses GTP + H2O = GDP + phosphate + H(+). GTP hydrolase that promotes the GTP-dependent binding of aminoacyl-tRNA to the A-site of ribosomes during protein biosynthesis. In Yersinia pestis bv. Antiqua (strain Nepal516), this protein is Elongation factor Tu 1.